The primary structure comprises 381 residues: uncharacterized protein (381 aa).

Positions 1–16 (MQTLLFYFFFINLIFA) are cleaved as a signal peptide. At 17–303 (HDLNVKTYKP…KILENSPCPN (287 aa)) the chain is on the lumenal side. Cys-118 and Cys-149 form a disulfide bridge. N-linked (GlcNAc...) asparagine glycans are attached at residues Asn-133, Asn-192, Asn-225, Asn-243, Asn-246, and Asn-287. Residues 304–324 (QPSIQPFGILMMLVSTIYGNF) traverse the membrane as a helical segment. Over 325 to 359 (KNLYNCIKRNTIGYIYNSIYDFWITEGMLFPMRNM) the chain is Cytoplasmic. A helical transmembrane segment spans residues 360-380 (DIFKITAISIGLSIPVFLWLL). Position 381 (Lys-381) is a topological domain, lumenal.

Belongs to the calreticulin family.

It localises to the endoplasmic reticulum membrane. This is an uncharacterized protein from Schizosaccharomyces pombe (strain 972 / ATCC 24843) (Fission yeast).